The following is a 788-amino-acid chain: Probable phosphoketolase 1 (788 aa).

Belongs to the XFP family. Requires thiamine diphosphate as cofactor.

The chain is Probable phosphoketolase 1 from Lactiplantibacillus plantarum (strain ATCC BAA-793 / NCIMB 8826 / WCFS1) (Lactobacillus plantarum).